The sequence spans 219 residues: Lipid transferase CIDEB (219 aa).

The residue at position 18 (T18) is a Phosphothreonine. The region spanning 34-110 (PQRPFRVCDH…VLEQGQSWSP (77 aa)) is the CIDE-N domain.

It belongs to the CIDE family. Interacts with DFFA. Interacts with DFFB; inhibited by DFFB. Interacts with APOB. Interacts with PREB/SEC12; facilitating loading of SCAP-SREBP into COPII vesicles. Highly enriched in the liver.

It localises to the lipid droplet. Its subcellular location is the endoplasmic reticulum membrane. It is found in the golgi apparatus. The protein resides in the cytoplasmic vesicle. The protein localises to the COPI-coated vesicle. In terms of biological role, lipid transferase specifically expressed in hepatocytes, which promotes unilocular lipid droplet formation by mediating lipid droplet fusion. Lipid droplet fusion promotes their enlargement, restricting lipolysis and favoring lipid storage. Localizes on the lipid droplet surface, at focal contact sites between lipid droplets, and mediates atypical lipid droplet fusion by promoting directional net neutral lipid transfer from the smaller to larger lipid droplets. The transfer direction may be driven by the internal pressure difference between the contacting lipid droplet pair. Promotes lipid exchange and lipid droplet fusion in both small and large lipid droplet-containing hepatocytes. In addition to its role in lipid droplet fusion, also involved in cytoplasmic vesicle biogenesis and transport. Required for very-low-density lipoprotein (VLDL) lipidation and maturation. Probably involved in the biogenesis of VLDL transport vesicles by forming a COPII vesicle coat and facilitating the formation of endoplasmic reticulum-derived large vesicles. Also involved in sterol-regulated export of the SCAP-SREBP complex, composed of SCAP, SREBF1/SREBP1 and SREBF2/SREBP2, by promoting loading of SCAP-SREBP into COPII vesicles. May also activate apoptosis. The polypeptide is Lipid transferase CIDEB (Mus musculus (Mouse)).